The sequence spans 187 residues: Ribosome-recycling factor (187 aa).

The protein belongs to the RRF family.

It is found in the cytoplasm. Functionally, responsible for the release of ribosomes from messenger RNA at the termination of protein biosynthesis. May increase the efficiency of translation by recycling ribosomes from one round of translation to another. This Rhodopseudomonas palustris (strain BisA53) protein is Ribosome-recycling factor.